A 133-amino-acid polypeptide reads, in one-letter code: Large-conductance mechanosensitive channel (133 aa).

Transmembrane regions (helical) follow at residues 10–30 (FAMR…GAFG) and 76–96 (GAFI…FLMI).

It belongs to the MscL family. In terms of assembly, homopentamer.

The protein localises to the cell inner membrane. Channel that opens in response to stretch forces in the membrane lipid bilayer. May participate in the regulation of osmotic pressure changes within the cell. The polypeptide is Large-conductance mechanosensitive channel (Pasteurella multocida (strain Pm70)).